The sequence spans 21 residues: Cold shock protein CspSt (21 aa).

One can recognise a CSD domain in the interval 1-21 (KNGTVKWFNAEKGFGFITSED).

It is found in the cytoplasm. This Streptococcus thermophilus protein is Cold shock protein CspSt.